The chain runs to 497 residues: Putative zinc finger and SCAN domain-containing protein 5D (497 aa).

Positions 41 to 123 (KAGRRMFSCP…DLLRNNRRPK (83 aa)) constitute an SCAN box domain. Residues 148-342 (PASVRDDPRG…GPAGAVSHPN (195 aa)) form a disordered region. The segment covering 158–167 (VSSQRASSVN) has biased composition (polar residues). 2 stretches are compositionally biased toward basic and acidic residues: residues 216–229 (PTLEKDLNVDREEN) and 249–259 (KEGKEPKKRAS). 5 consecutive C2H2-type zinc fingers follow at residues 352-374 (FACGVCNKRFTCNSKLAIHMRSH), 380-402 (FQCNFCERCFTQLSDLRVHQRIH), 408-430 (YTCDICHKRFNRMFSLKCHKRSH), 436-458 (YKCKDCNQVFTYRKNLNEHKLIH), and 464-486 (YKCPKCLRAFRRPETLKYHQKTH).

It is found in the nucleus. In Homo sapiens (Human), this protein is Putative zinc finger and SCAN domain-containing protein 5D.